A 337-amino-acid polypeptide reads, in one-letter code: Nucleoid-associated protein HS_0228 (337 aa).

This sequence belongs to the YejK family.

Its subcellular location is the cytoplasm. It localises to the nucleoid. The sequence is that of Nucleoid-associated protein HS_0228 from Histophilus somni (strain 129Pt) (Haemophilus somnus).